The chain runs to 477 residues: Endoglucanase A (477 aa).

The first 32 residues, M1–A32, serve as a signal peptide directing secretion. The Proton donor role is filled by E95. D152 (nucleophile) is an active-site residue. Residues P411–Y477 form the Dockerin domain.

Belongs to the glycosyl hydrolase 8 (cellulase D) family.

The enzyme catalyses Endohydrolysis of (1-&gt;4)-beta-D-glucosidic linkages in cellulose, lichenin and cereal beta-D-glucans.. Functionally, this enzyme catalyzes the endohydrolysis of 1,4-beta-glucosidic linkages in cellulose, lichenin and cereal beta-D-glucans. The chain is Endoglucanase A (celA) from Acetivibrio thermocellus (strain ATCC 27405 / DSM 1237 / JCM 9322 / NBRC 103400 / NCIMB 10682 / NRRL B-4536 / VPI 7372) (Clostridium thermocellum).